The following is a 306-amino-acid chain: UDP-3-O-acyl-N-acetylglucosamine deacetylase (306 aa).

Residues His79, His238, and Asp242 each contribute to the Zn(2+) site. The Proton donor role is filled by His265.

It belongs to the LpxC family. Zn(2+) serves as cofactor.

It catalyses the reaction a UDP-3-O-[(3R)-3-hydroxyacyl]-N-acetyl-alpha-D-glucosamine + H2O = a UDP-3-O-[(3R)-3-hydroxyacyl]-alpha-D-glucosamine + acetate. It participates in glycolipid biosynthesis; lipid IV(A) biosynthesis; lipid IV(A) from (3R)-3-hydroxytetradecanoyl-[acyl-carrier-protein] and UDP-N-acetyl-alpha-D-glucosamine: step 2/6. Its function is as follows. Catalyzes the hydrolysis of UDP-3-O-myristoyl-N-acetylglucosamine to form UDP-3-O-myristoylglucosamine and acetate, the committed step in lipid A biosynthesis. The polypeptide is UDP-3-O-acyl-N-acetylglucosamine deacetylase (Shewanella oneidensis (strain ATCC 700550 / JCM 31522 / CIP 106686 / LMG 19005 / NCIMB 14063 / MR-1)).